A 104-amino-acid chain; its full sequence is Enhancer of rudimentary homolog 1 (104 aa).

The protein belongs to the E(R) family. As to quaternary structure, homodimer. Component of the erh1-mmi1 complex. Interacts with mmi1 (via N-terminus) in a 2:2 stoichiometry.

Its subcellular location is the nucleus. The protein localises to the cytoplasm. Forms part of the erh1-mmi1 complex that recruits the CCR4-NOT complex and the NURS complex to target RNAs. Suppresses the meiotic program during vegetative growth and promotes the meiotic program during mating. Recruitment of the NURS complex to target mRNAs promotes mRNA decay by engagement of the nuclear exosome, and formation of heterochromatin islands at meiotic genes silenced by the exosome. Recruitment of the CCR4-NOT complex to target RNAs promotes heterochromatin formation at RNAi-dependent heterochromatin domains (HOODs), including a subset of meiotic genes, lncRNAs and retrotransposons. Recruitment of the CCR4-NOT complex to rDNA promotes rDNA heterochromatin assembly. The sequence is that of Enhancer of rudimentary homolog 1 from Schizosaccharomyces pombe (strain 972 / ATCC 24843) (Fission yeast).